The sequence spans 367 residues: Phosphoribosylaminoimidazole-succinocarboxamide synthase (367 aa).

It belongs to the SAICAR synthetase family.

It carries out the reaction 5-amino-1-(5-phospho-D-ribosyl)imidazole-4-carboxylate + L-aspartate + ATP = (2S)-2-[5-amino-1-(5-phospho-beta-D-ribosyl)imidazole-4-carboxamido]succinate + ADP + phosphate + 2 H(+). Its pathway is purine metabolism; IMP biosynthesis via de novo pathway; 5-amino-1-(5-phospho-D-ribosyl)imidazole-4-carboxamide from 5-amino-1-(5-phospho-D-ribosyl)imidazole-4-carboxylate: step 1/2. The protein is Phosphoribosylaminoimidazole-succinocarboxamide synthase of Shewanella pealeana (strain ATCC 700345 / ANG-SQ1).